The primary structure comprises 154 residues: Large ribosomal subunit protein uL15 (154 aa).

Positions 1–44 (MKLNELGNCKGATRNRKRVGRGIGSGTGKTSGRGVKGQKSRSGV) are disordered. Gly residues predominate over residues 21-35 (RGIGSGTGKTSGRGV).

The protein belongs to the universal ribosomal protein uL15 family. As to quaternary structure, part of the 50S ribosomal subunit.

Its function is as follows. Binds to the 23S rRNA. This chain is Large ribosomal subunit protein uL15, found in Bartonella quintana (strain Toulouse) (Rochalimaea quintana).